We begin with the raw amino-acid sequence, 295 residues long: Mediator of RNA polymerase II transcription subunit 27 (295 aa).

It belongs to the Mediator complex subunit 27 family. As to quaternary structure, component of the Mediator complex.

The protein localises to the nucleus. Its function is as follows. Component of the Mediator complex, a coactivator involved in the regulated transcription of nearly all RNA polymerase II-dependent genes. Mediator functions as a bridge to convey information from gene-specific regulatory proteins to the basal RNA polymerase II transcription machinery. Mediator is recruited to promoters by direct interactions with regulatory proteins and serves as a scaffold for the assembly of a functional preinitiation complex with RNA polymerase II and the general transcription factors. This chain is Mediator of RNA polymerase II transcription subunit 27 (MED27), found in Anopheles gambiae (African malaria mosquito).